A 302-amino-acid chain; its full sequence is Probable protein S-acyltransferase 13 (302 aa).

2 helical membrane-spanning segments follow: residues 17-37 and 56-76; these read SIMI…VVVV and VLAF…SVVV. The DHHC domain occupies 116–166; that stretch reads RYCRKCNQYKPPRSHHCSVCGRCILKMDHHCVWVVNCVGANNYKSFLLFLF. The active-site S-palmitoyl cysteine intermediate is Cys146. 2 consecutive transmembrane segments (helical) span residues 166–186 and 204–224; these read FYTF…FLVF and SFVA…FLIM.

This sequence belongs to the DHHC palmitoyltransferase family.

Its subcellular location is the cell membrane. The protein resides in the cytoplasmic vesicle membrane. The enzyme catalyses L-cysteinyl-[protein] + hexadecanoyl-CoA = S-hexadecanoyl-L-cysteinyl-[protein] + CoA. In terms of biological role, palmitoyl acyltransferase. The chain is Probable protein S-acyltransferase 13 (PAT13) from Arabidopsis thaliana (Mouse-ear cress).